Consider the following 623-residue polypeptide: V-type proton ATPase catalytic subunit A (623 aa).

Residue 252-259 participates in ATP binding; it reads GAFGCGKT.

The protein belongs to the ATPase alpha/beta chains family. V-ATPase is a heteromultimeric enzyme composed of a peripheral catalytic V1 complex (main components: subunits A, B, C, D, E, and F) attached to an integral membrane V0 proton pore complex (main component: the proteolipid protein).

The enzyme catalyses ATP + H2O + 4 H(+)(in) = ADP + phosphate + 5 H(+)(out). Functionally, catalytic subunit of the peripheral V1 complex of vacuolar ATPase. V-ATPase vacuolar ATPase is responsible for acidifying a variety of intracellular compartments in eukaryotic cells. The chain is V-type proton ATPase catalytic subunit A from Daucus carota (Wild carrot).